The following is a 186-amino-acid chain: Ribosome-recycling factor (186 aa).

This sequence belongs to the RRF family.

The protein resides in the cytoplasm. Functionally, responsible for the release of ribosomes from messenger RNA at the termination of protein biosynthesis. May increase the efficiency of translation by recycling ribosomes from one round of translation to another. The chain is Ribosome-recycling factor from Bartonella tribocorum (strain CIP 105476 / IBS 506).